The sequence spans 242 residues: 4-hydroxy-tetrahydrodipicolinate reductase (242 aa).

NAD(+) contacts are provided by residues 79-81 (ATT) and 103-106 (SANM). Residue H135 is the Proton donor/acceptor of the active site. H136 is a binding site for (S)-2,3,4,5-tetrahydrodipicolinate. K139 functions as the Proton donor in the catalytic mechanism. 145 to 146 (GT) contributes to the (S)-2,3,4,5-tetrahydrodipicolinate binding site.

The protein belongs to the DapB family.

It localises to the cytoplasm. The enzyme catalyses (S)-2,3,4,5-tetrahydrodipicolinate + NAD(+) + H2O = (2S,4S)-4-hydroxy-2,3,4,5-tetrahydrodipicolinate + NADH + H(+). The catalysed reaction is (S)-2,3,4,5-tetrahydrodipicolinate + NADP(+) + H2O = (2S,4S)-4-hydroxy-2,3,4,5-tetrahydrodipicolinate + NADPH + H(+). Its pathway is amino-acid biosynthesis; L-lysine biosynthesis via DAP pathway; (S)-tetrahydrodipicolinate from L-aspartate: step 4/4. Its function is as follows. Catalyzes the conversion of 4-hydroxy-tetrahydrodipicolinate (HTPA) to tetrahydrodipicolinate. In Staphylococcus carnosus (strain TM300), this protein is 4-hydroxy-tetrahydrodipicolinate reductase.